Reading from the N-terminus, the 195-residue chain is Exosome complex component CSL4 (195 aa).

Ser21 carries the phosphoserine modification. The S1 motif domain occupies 66–147 (DVGAVVTCKV…AQSNYLLTTA (82 aa)).

It belongs to the CSL4 family. As to quaternary structure, component of the RNA exosome core complex (Exo-9), composed of EXOSC1, EXOSC2, EXOSC3, EXOSC4, EXOSC5, EXOSC6, EXOSC7, EXOSC8 and EXOSC9; within the complex interacts with EXOSC6. The catalytically inactive RNA exosome core complex (Exo-9) associates with the catalytic subunit EXOSC10/RRP6. Exo-9 may associate with DIS3 to form the nucleolar exosome complex, or DIS3L to form the cytoplasmic exosome complex. Exo-9 is formed by a hexameric base ring consisting of the heterodimers EXOSC4-EXOSC9, EXOSC5-EXOSC8 and EXOSC6-EXOSC7, and a cap ring consisting of EXOSC1, EXOSC2 and EXOSC3. The RNA exosome complex associates with cofactors C1D/RRP47, MPHOSPH6/MPP6 and MTREX/MTR4. Interacts with DDX60.

It localises to the nucleus. The protein resides in the nucleolus. Its subcellular location is the cytoplasm. Functionally, non-catalytic component of the RNA exosome complex which has 3'-&gt;5' exoribonuclease activity and participates in a multitude of cellular RNA processing and degradation events. In the nucleus, the RNA exosome complex is involved in proper maturation of stable RNA species such as rRNA, snRNA and snoRNA, in the elimination of RNA processing by-products and non-coding 'pervasive' transcripts, such as antisense RNA species and promoter-upstream transcripts (PROMPTs), and of mRNAs with processing defects, thereby limiting or excluding their export to the cytoplasm. The RNA exosome may be involved in Ig class switch recombination (CSR) and/or Ig variable region somatic hypermutation (SHM) by targeting AICDA deamination activity to transcribed dsDNA substrates. In the cytoplasm, the RNA exosome complex is involved in general mRNA turnover and specifically degrades inherently unstable mRNAs containing AU-rich elements (AREs) within their 3' untranslated regions, and in RNA surveillance pathways, preventing translation of aberrant mRNAs. It seems to be involved in degradation of histone mRNA. The catalytic inactive RNA exosome core complex of 9 subunits (Exo-9) is proposed to play a pivotal role in the binding and presentation of RNA for ribonucleolysis, and to serve as a scaffold for the association with catalytic subunits and accessory proteins or complexes. EXOSC1 as peripheral part of the Exo-9 complex stabilizes the hexameric ring of RNase PH-domain subunits through contacts with EXOSC6 and EXOSC8. The chain is Exosome complex component CSL4 (Exosc1) from Mus musculus (Mouse).